We begin with the raw amino-acid sequence, 239 residues long: Ribonuclease 3 (239 aa).

One can recognise an RNase III domain in the interval 18–141; that stretch reads YLTLEKALGY…LMAGVYLEAG (124 aa). Glutamate 54 serves as a coordination point for Mg(2+). Residue aspartate 58 is part of the active site. Residues serine 127 and glutamate 130 each coordinate Mg(2+). Glutamate 130 is a catalytic residue. One can recognise a DRBM domain in the interval 168-237; it reads DYKTALQELT…AYQALQKLKE (70 aa).

The protein belongs to the ribonuclease III family. In terms of assembly, homodimer. Mg(2+) serves as cofactor.

The protein localises to the cytoplasm. It catalyses the reaction Endonucleolytic cleavage to 5'-phosphomonoester.. Its function is as follows. Digests double-stranded RNA. Involved in the processing of primary rRNA transcript to yield the immediate precursors to the large and small rRNAs (23S and 16S). Processes some mRNAs, and tRNAs when they are encoded in the rRNA operon. Processes pre-crRNA and tracrRNA of type II CRISPR loci if present in the organism. This is Ribonuclease 3 from Helicobacter pylori (strain P12).